Here is an 842-residue protein sequence, read N- to C-terminus: Alanine--tRNA ligase (842 aa).

Residues histidine 549, histidine 553, cysteine 650, and histidine 654 each contribute to the Zn(2+) site.

This sequence belongs to the class-II aminoacyl-tRNA synthetase family. The cofactor is Zn(2+).

It localises to the cytoplasm. The enzyme catalyses tRNA(Ala) + L-alanine + ATP = L-alanyl-tRNA(Ala) + AMP + diphosphate. Functionally, catalyzes the attachment of alanine to tRNA(Ala) in a two-step reaction: alanine is first activated by ATP to form Ala-AMP and then transferred to the acceptor end of tRNA(Ala). Also edits incorrectly charged Ser-tRNA(Ala) and Gly-tRNA(Ala) via its editing domain. The sequence is that of Alanine--tRNA ligase from Campylobacter jejuni (strain RM1221).